Consider the following 137-residue polypeptide: Nucleoside diphosphate kinase (137 aa).

ATP-binding residues include K11, F59, R87, T93, R104, and N114. H117 acts as the Pros-phosphohistidine intermediate in catalysis.

The protein belongs to the NDK family. Homotetramer. Requires Mg(2+) as cofactor.

It localises to the cytoplasm. It carries out the reaction a 2'-deoxyribonucleoside 5'-diphosphate + ATP = a 2'-deoxyribonucleoside 5'-triphosphate + ADP. The catalysed reaction is a ribonucleoside 5'-diphosphate + ATP = a ribonucleoside 5'-triphosphate + ADP. Its function is as follows. Major role in the synthesis of nucleoside triphosphates other than ATP. The ATP gamma phosphate is transferred to the NDP beta phosphate via a ping-pong mechanism, using a phosphorylated active-site intermediate. This is Nucleoside diphosphate kinase from Frankia casuarinae (strain DSM 45818 / CECT 9043 / HFP020203 / CcI3).